We begin with the raw amino-acid sequence, 257 residues long: Imidazole glycerol phosphate synthase subunit HisF (257 aa).

Active-site residues include aspartate 12 and aspartate 131.

The protein belongs to the HisA/HisF family. Heterodimer of HisH and HisF.

It localises to the cytoplasm. The catalysed reaction is 5-[(5-phospho-1-deoxy-D-ribulos-1-ylimino)methylamino]-1-(5-phospho-beta-D-ribosyl)imidazole-4-carboxamide + L-glutamine = D-erythro-1-(imidazol-4-yl)glycerol 3-phosphate + 5-amino-1-(5-phospho-beta-D-ribosyl)imidazole-4-carboxamide + L-glutamate + H(+). It participates in amino-acid biosynthesis; L-histidine biosynthesis; L-histidine from 5-phospho-alpha-D-ribose 1-diphosphate: step 5/9. In terms of biological role, IGPS catalyzes the conversion of PRFAR and glutamine to IGP, AICAR and glutamate. The HisF subunit catalyzes the cyclization activity that produces IGP and AICAR from PRFAR using the ammonia provided by the HisH subunit. In Burkholderia vietnamiensis (strain G4 / LMG 22486) (Burkholderia cepacia (strain R1808)), this protein is Imidazole glycerol phosphate synthase subunit HisF.